Consider the following 241-residue polypeptide: Endodeoxyribonuclease NucC (241 aa).

Residues D73, E104, and K106 contribute to the active site. Mg(2+) contacts are provided by D73 and E104.

It belongs to the NucC endonuclease family. Self-oligomerizes. Forms homotrimers; in the presence of cAAA the trimers associate face-to-face to form homohexamers. The 2 cAAA-binding sites are on the exterior of the hexamer at the three-way junction, there are maximally 2 cyclic nucleotides per hexamer. Requires Mg(2+) as cofactor.

With respect to regulation, activated by cAAA and to a lesser extent cAA; both cyclic nucleotides are products of its cognate CD-NTase. Cyclic nucleotide binding causes hexamerization. Functionally, effector DNase of a CBASS antivirus system. CBASS (cyclic oligonucleotide-based antiphage signaling system) provides immunity against bacteriophage. The CD-NTase protein synthesizes cyclic nucleotides in response to infection; these serve as specific second messenger signals. The signals activate a diverse range of effectors, leading to bacterial cell death and thus abortive phage infection. A type III-C(AAA) CBASS system. A cyclic nucleotide-activated dsDNase. In the presence of 3',3',3'-cyclic AMP-AMP-AMP (cAAA) and to a lesser extent cyclic-di-AMP (c-di-AMP), endonucleolytically degrades dsDNA. Binds one cAAA in a pocket on one surface of the trimer; cAAA binding promotes hexamerization which is probably necessary for nuclease activation. The nuclease digests dsDNA to about 50 bp lengths. DNA has been modeled to contact a pair of juxtaposed active sites (one from each layer of the hexamer), accounting for cleavage on both strands. This Pseudomonas aeruginosa protein is Endodeoxyribonuclease NucC.